The following is a 51-amino-acid chain: Magnetosome protein Mms5 (51 aa).

Residues 1 to 8 (MLSAKGVS) are Lumenal-facing. The interval 9–16 (LGLGLGLG) is LG region. The chain crosses the membrane as a helical span at residues 9-29 (LGLGLGLGAWGPVLLGVVGVA). At 30-51 (GALALYGYYKNRNAEPAAAEAV) the chain is on the cytoplasmic side.

It belongs to the magnetosome MamD/Mms5 family. In terms of processing, may undergo N-terminal cleavage.

The protein resides in the magnetosome membrane. Its function is as follows. Might be involved in magnetite crystal growth. The chain is Magnetosome protein Mms5 from Magnetospirillum gryphiswaldense (strain DSM 6361 / JCM 21280 / NBRC 15271 / MSR-1).